Consider the following 298-residue polypeptide: ADP/ATP translocase 3 (298 aa).

The residue at position 1 (Met-1) is an N-acetylmethionine. Residues 1–7 (MTEQAIS) lie on the Mitochondrial intermembrane side of the membrane. Thr-2 carries the post-translational modification N-acetylthreonine; in ADP/ATP translocase 3, N-terminally processed. The Solcar 1 repeat unit spans residues 6–98 (ISFAKDFLAG…FAFKDKYKQI (93 aa)). A helical transmembrane segment spans residues 8–37 (FAKDFLAGGIAAAISKTAVAPIERVKLLLQ). Residues 38–74 (VQHASKQIAADKQYKGIVDCIVRIPKEQGVLSFWRGN) lie on the Mitochondrial matrix side of the membrane. Lys-52 is modified (N6,N6,N6-trimethyllysine). A helical transmembrane segment spans residues 75 to 99 (LANVIRYFPTQALNFAFKDKYKQIF). ADP contacts are provided by Arg-80 and Lys-92. The Mitochondrial intermembrane portion of the chain corresponds to 100–109 (LGGVDKHTQF). Residue Lys-105 is modified to N6-acetyllysine. The helical transmembrane segment at 110–130 (WRYFAGNLASGGAAGATSLCF) threads the bilayer. 2 Solcar repeats span residues 111-201 (RYFA…AKGM) and 212-297 (VSWM…LKKV). At 131–178 (VYPLDFARTRLAADVGKSGTEREFRGLGDCLVKITKSDGIRGLYQGFS) the chain is on the mitochondrial matrix side. The helical transmembrane segment at 179–199 (VSVQGIIIYRAAYFGVYDTAK) threads the bilayer. The Mitochondrial intermembrane portion of the chain corresponds to 200 to 210 (GMLPDPKNTHI). Residues 211–231 (VVSWMIAQTVTAVAGVVSYPF) traverse the membrane as a helical segment. Residues 232-273 (DTVRRRMMMQSGRKGADIMYTGTVDCWRKIFRDEGGKAFFKG) are Mitochondrial matrix-facing. Arg-235 provides a ligand contact to ADP. The tract at residues 235 to 240 (RRRMMM) is important for transport activity. A Nucleotide carrier signature motif motif is present at residues 235-240 (RRRMMM). Lys-268 carries the N6-acetyllysine modification. A helical membrane pass occupies residues 274 to 291 (AWSNVLRGMGGAFVLVLY). Residues 292-298 (DELKKVI) are Mitochondrial intermembrane-facing.

It belongs to the mitochondrial carrier (TC 2.A.29) family. In terms of assembly, monomer. Found in a complex with ARL2, ARL2BP and SLC25A6/ANT3. (Microbial infection) Interacts with influenza A virus PB1-F2 protein. As to quaternary structure, (Microbial infection) Interacts with HIV-1 Vpr. Trimethylated by ANTKMT at Lys-52. In terms of tissue distribution, expressed in erythrocytes (at protein level).

The protein resides in the mitochondrion inner membrane. The protein localises to the membrane. It catalyses the reaction ADP(in) + ATP(out) = ADP(out) + ATP(in). The catalysed reaction is H(+)(in) = H(+)(out). With respect to regulation, the matrix-open state (m-state) is inhibited by the membrane-permeable bongkrekic acid (BKA). The cytoplasmic-open state (c-state) is inhibited by the membrane-impermeable toxic inhibitor carboxyatractyloside (CATR). Proton transporter activity is inhibited by ADP:ATP antiporter activity. Functionally, ADP:ATP antiporter that mediates import of ADP into the mitochondrial matrix for ATP synthesis, and export of ATP out to fuel the cell. Cycles between the cytoplasmic-open state (c-state) and the matrix-open state (m-state): operates by the alternating access mechanism with a single substrate-binding site intermittently exposed to either the cytosolic (c-state) or matrix (m-state) side of the inner mitochondrial membrane. In addition to its ADP:ATP antiporter activity, also involved in mitochondrial uncoupling and mitochondrial permeability transition pore (mPTP) activity. Plays a role in mitochondrial uncoupling by acting as a proton transporter: proton transport uncouples the proton flows via the electron transport chain and ATP synthase to reduce the efficiency of ATP production and cause mitochondrial thermogenesis. Proton transporter activity is inhibited by ADP:ATP antiporter activity, suggesting that SLC25A6/ANT3 acts as a master regulator of mitochondrial energy output by maintaining a delicate balance between ATP production (ADP:ATP antiporter activity) and thermogenesis (proton transporter activity). Proton transporter activity requires free fatty acids as cofactor, but does not transport it. Also plays a key role in mPTP opening, a non-specific pore that enables free passage of the mitochondrial membranes to solutes of up to 1.5 kDa, and which contributes to cell death. It is however unclear if SLC25A6/ANT3 constitutes a pore-forming component of mPTP or regulates it. This is ADP/ATP translocase 3 from Homo sapiens (Human).